A 461-amino-acid chain; its full sequence is Ornithine decarboxylase (461 aa).

An N6-(pyridoxal phosphate)lysine modification is found at Lys69. Residues Ser200, Gly237, and 274–277 each bind pyridoxal 5'-phosphate; that span reads EPGR. A Phosphoserine; by CK2 modification is found at Ser303. Position 331 to 332 (331 to 332) interacts with substrate; the sequence is YD. Cys360 serves as the catalytic Proton donor; shared with dimeric partner. Cys360 carries the S-nitrosocysteine modification. Substrate is bound at residue Asp361. Tyr389 lines the pyridoxal 5'-phosphate pocket.

Belongs to the Orn/Lys/Arg decarboxylase class-II family. As to quaternary structure, homodimer. Only the dimer is catalytically active, as the active sites are constructed of residues from both monomers. Pyridoxal 5'-phosphate is required as a cofactor.

The catalysed reaction is L-ornithine + H(+) = putrescine + CO2. It participates in amine and polyamine biosynthesis; putrescine biosynthesis via L-ornithine pathway; putrescine from L-ornithine: step 1/1. Its activity is regulated as follows. Inhibited by antizymes (AZs) OAZ1, OAZ2 and OAZ3 in response to polyamine levels. AZs inhibit the assembly of the functional homodimer by binding to ODC monomers. Additionally, OAZ1 targets ODC monomers for ubiquitin-independent proteolytic destruction by the 26S proteasome. Its function is as follows. Catalyzes the first and rate-limiting step of polyamine biosynthesis that converts ornithine into putrescine, which is the precursor for the polyamines, spermidine and spermine. Polyamines are essential for cell proliferation and are implicated in cellular processes, ranging from DNA replication to apoptosis. The chain is Ornithine decarboxylase (Odc1) from Mus pahari (Gairdner's shrew-mouse).